The chain runs to 896 residues: Pentatricopeptide repeat-containing protein At5g03800 (896 aa).

PPR repeat units follow at residues 113-143 (KTRLGNALISTYLKLGFPREAILVFVSLSSP), 144-178 (TVVSYTALISGFSRLNLEIEALKVFFRMRKAGLVQ), 180-214 (NEYTFVAILTACVRVSRFSLGIQIHGLIVKSGFLN), 215-247 (SVFVSNSLMSLYDKDSGSSCDDVLKLFDEIPQR), 248-278 (DVASWNTVVSSLVKEGKSHKAFDLFYEMNRV), 284-318 (DSFTLSTLLSSCTDSSVLLRGRELHGRAIRIGLMQ), 319-349 (ELSVNNALIGFYSKFWDMKKVESLYEMMMAQ), 350-380 (DAVTFTEMITAYMSFGMVDSAVEIFANVTEK), 381-415 (NTITYNALMAGFCRNGHGLKALKLFTDMLQRGVEL), 416-450 (TDFSLTSAVDACGLVSEKKVSEQIHGFCIKFGTAF), 451-481 (NPCIQTALLDMCTRCERMADAEEMFDQWPSN), 484-519 (SSKATTSIIGGYARNGLPDKAVSLFHRTLCEQKLFL), 520-554 (DEVSLTLILAVCGTLGFREMGYQIHCYALKAGYFS), 555-585 (DISLGNSLISMYAKCCDSDDAIKIFNTMREH), 586-620 (DVISWNSLISCYILQRNGDEALALWSRMNEKEIKP), 621-653 (DIITLTLVISAFRYTESNKLSSCRDLFLSMKTI), and 659-689 (TTEHYTAFVRVLGHWGLLEEAEDTINSMPVQ). The segment at 694–769 (VLRALLDSCR…HPAKSWIIHE (76 aa)) is type E motif. A type E(+) motif region spans residues 770–800 (NKIHSFHARDTSHPQEKDIYRGLEILIMECL). The tract at residues 801-896 (KVGYEPNTEY…NGKCSCRDLW (96 aa)) is type DYW motif.

It belongs to the PPR family. PCMP-H subfamily.

Its function is as follows. May play a role in embryogenesis. This chain is Pentatricopeptide repeat-containing protein At5g03800 (EMB175), found in Arabidopsis thaliana (Mouse-ear cress).